Reading from the N-terminus, the 182-residue chain is CDP-diacylglycerol--glycerol-3-phosphate 3-phosphatidyltransferase (182 aa).

Over 2–12 (QFNIPTLLTLF) the chain is Cytoplasmic. The chain crosses the membrane as a helical span at residues 13 to 37 (RVILIPFFVLVFYLPVTWSPFAAAL). Residues 38–60 (IFCVAAVTDWFDGFLARRWNQST) are Periplasmic-facing. A helical transmembrane segment spans residues 61–81 (RFGAFLDPVADKVLVAIAMVL). At 82–86 (VTEHY) the chain is on the cytoplasmic side. Residues 87 to 107 (HSWWVTLPAATMIAREIIISA) form a helical membrane-spanning segment. Residues 108–145 (LREWMAELGKRSSVAVSWIGKVKTTAQMVALAWLLWRP) lie on the Periplasmic side of the membrane. The chain crosses the membrane as a helical span at residues 146–168 (NIWVEYVGIALFFVAAVLTLWSM). Residues 169–181 (LQYLSAARADLLD) lie on the Cytoplasmic side of the membrane.

This sequence belongs to the CDP-alcohol phosphatidyltransferase class-I family.

The protein resides in the cell inner membrane. The enzyme catalyses a CDP-1,2-diacyl-sn-glycerol + sn-glycerol 3-phosphate = a 1,2-diacyl-sn-glycero-3-phospho-(1'-sn-glycero-3'-phosphate) + CMP + H(+). The protein operates within phospholipid metabolism; phosphatidylglycerol biosynthesis; phosphatidylglycerol from CDP-diacylglycerol: step 1/2. Catalyzes the conversion of cytidine diphosphate diacylglycerol (CDP-DG) and glycerol 3-phosphate into phosphatidylglycerol. Essential for the synthesis of anionic phospholipids, thereby playing a role in balancing the ratio of zwitterionic and anionic phospholipids, which is thought to be important for normal membrane function. The protein is CDP-diacylglycerol--glycerol-3-phosphate 3-phosphatidyltransferase of Shigella boydii serotype 4 (strain Sb227).